Reading from the N-terminus, the 333-residue chain is Adenosine deaminase (333 aa).

The Zn(2+) site is built by histidine 12 and histidine 14. Residues histidine 14, aspartate 16, and glycine 170 each coordinate substrate. Histidine 197 serves as a coordination point for Zn(2+). Glutamate 200 (proton donor) is an active-site residue. Aspartate 278 provides a ligand contact to Zn(2+). Position 279 (aspartate 279) interacts with substrate.

The protein belongs to the metallo-dependent hydrolases superfamily. Adenosine and AMP deaminases family. Adenosine deaminase subfamily. Zn(2+) is required as a cofactor.

It catalyses the reaction adenosine + H2O + H(+) = inosine + NH4(+). It carries out the reaction 2'-deoxyadenosine + H2O + H(+) = 2'-deoxyinosine + NH4(+). Functionally, catalyzes the hydrolytic deamination of adenosine and 2-deoxyadenosine. This Salmonella schwarzengrund (strain CVM19633) protein is Adenosine deaminase.